Consider the following 453-residue polypeptide: Tubulin delta chain (453 aa).

Residue 143–149 (AGGTGSG) coordinates GTP.

Belongs to the tubulin family. Found in a complex with TEDC1, TEDC2, TUBE1 and TUBD1.

The protein localises to the nucleus. Its subcellular location is the cytoplasm. The protein resides in the cytoskeleton. It localises to the microtubule organizing center. It is found in the centrosome. The protein localises to the centriole. Its subcellular location is the cell projection. The protein resides in the cilium. Acts as a positive regulator of hedgehog signaling and regulates ciliary function. The chain is Tubulin delta chain (TUBD1) from Homo sapiens (Human).